The chain runs to 396 residues: Elongation factor Tu (396 aa).

Residues 10–206 (KPHVNVGTIG…ALDTYIPTPE (197 aa)) enclose the tr-type G domain. The segment at 19–26 (GHVDHGKT) is G1. 19 to 26 (GHVDHGKT) serves as a coordination point for GTP. Thr-26 contributes to the Mg(2+) binding site. Residues 60-64 (GITIN) form a G2 region. Positions 81 to 84 (DCPG) are G3. GTP-binding positions include 81–85 (DCPGH) and 136–139 (NKCD). The G4 stretch occupies residues 136-139 (NKCD). A G5 region spans residues 174 to 176 (SAK).

It belongs to the TRAFAC class translation factor GTPase superfamily. Classic translation factor GTPase family. EF-Tu/EF-1A subfamily. As to quaternary structure, monomer.

It is found in the cytoplasm. It carries out the reaction GTP + H2O = GDP + phosphate + H(+). Functionally, GTP hydrolase that promotes the GTP-dependent binding of aminoacyl-tRNA to the A-site of ribosomes during protein biosynthesis. The sequence is that of Elongation factor Tu from Polynucleobacter asymbioticus (strain DSM 18221 / CIP 109841 / QLW-P1DMWA-1) (Polynucleobacter necessarius subsp. asymbioticus).